Here is a 220-residue protein sequence, read N- to C-terminus: Iron-sulfur cluster repair protein YtfE (220 aa).

This sequence belongs to the RIC family. YtfE subfamily. In terms of assembly, homodimer.

Its subcellular location is the cytoplasm. Functionally, di-iron-containing protein involved in the repair of iron-sulfur clusters damaged by oxidative and nitrosative stress conditions. The protein is Iron-sulfur cluster repair protein YtfE of Salmonella choleraesuis (strain SC-B67).